The chain runs to 398 residues: uncharacterized protein (398 aa).

This is an uncharacterized protein from Buchnera aphidicola subsp. Baizongia pistaciae (strain Bp).